The primary structure comprises 108 residues: Cytochrome c-555 (108 aa).

The N-terminal stretch at 1 to 22 is a signal peptide; sequence MSRFVSAALVGAALLVSGNAFA. 4 residues coordinate heme c: Cys-36, Cys-39, His-40, and Met-82.

In terms of processing, binds 1 heme c group covalently per subunit.

Functionally, this basic c-type monoheme cytochrome has been found exclusively in the green photosynthetic bacteria, although its role in bacterial photosynthesis is not established. It has an unusually low redox potential compared with mitochondrial cytochrome c. It is reactive with cytochrome c oxidases but not with reductases. The sequence is that of Cytochrome c-555 from Chlorobaculum tepidum (strain ATCC 49652 / DSM 12025 / NBRC 103806 / TLS) (Chlorobium tepidum).